Reading from the N-terminus, the 540-residue chain is MPIVKLNNEYLTRLTGTDIETIRSSLPMMGSEVEREEEKQTDVQFFPNRPDLYSAEGTARALRGYLGIETGLPTYEVKPSGISFSVDPKLANIRPYLGSAVIRNVHMDNAMIESLMGLQESLHWAVGRGRKKVAIGVHDLDKIEGPFSYIAADRKTTFVPLDYDVEMTMEEILAEHPKGKAYARIVEEFERFPLITDAKGRVCSFPPIINGELTRVTEDTQNILLDVTGIEPRAVSVAVKILCAAFVEMGAEIESVEIDGVVSPDLRPEKRTVSVSECSKLTGIPMTASQMTELLMKMRFGAEVIDEDTVSVDIPCYRADIMHDHDVYEDAAIAYGYDKIETSLPPSFTVGKPHPVQKLYSLVRNIMVGLSYIENTPFTLTSGDVSYSLMHRPENPAALHVLHPISEDQTIIRTDILPLLMESLSINRSRELPQKIFACGDVVENLVTYPKMAAASIHTSADFSEIYAVMDAFCRMMSIEYEVRDSADDAFIPGRRGDIYVSGEKIGVFGEINPDVLVGFGLEHQAVAFEIDLRGFVSNE.

The B5 domain occupies 266–342; the sequence is LRPEKRTVSV…IAYGYDKIET (77 aa). Mg(2+) is bound by residues D320, D326, E329, and D330.

This sequence belongs to the phenylalanyl-tRNA synthetase beta subunit family. Type 2 subfamily. Tetramer of two alpha and two beta subunits. Mg(2+) serves as cofactor.

Its subcellular location is the cytoplasm. It carries out the reaction tRNA(Phe) + L-phenylalanine + ATP = L-phenylalanyl-tRNA(Phe) + AMP + diphosphate + H(+). The chain is Phenylalanine--tRNA ligase beta subunit from Methanocorpusculum labreanum (strain ATCC 43576 / DSM 4855 / Z).